An 84-amino-acid polypeptide reads, in one-letter code: Cell division topological specificity factor (84 aa).

It belongs to the MinE family.

Functionally, prevents the cell division inhibition by proteins MinC and MinD at internal division sites while permitting inhibition at polar sites. This ensures cell division at the proper site by restricting the formation of a division septum at the midpoint of the long axis of the cell. This Pseudomonas putida (strain ATCC 700007 / DSM 6899 / JCM 31910 / BCRC 17059 / LMG 24140 / F1) protein is Cell division topological specificity factor.